A 686-amino-acid chain; its full sequence is ATP-dependent zinc metalloprotease FTSH 6, chloroplastic (686 aa).

The segment covering 1-14 (MSPTAMSLTTTTSR) has biased composition (polar residues). The disordered stretch occupies residues 1–52 (MSPTAMSLTTTTSRLPICRAQGGGVAKEKRTTPPPAKITPPSSSSSEAAGLS). A chloroplast-targeting transit peptide spans 1 to 75 (MSPTAMSLTT…LGLTAARPAR (75 aa)). Residues 39–52 (TPPSSSSSEAAGLS) show a composition bias toward low complexity. Residues 164–184 (VMLLDLLVNFGFPLLFVASLL) form a helical membrane-spanning segment. 261-268 (GPPGTGKT) contacts ATP. Histidine 483 is a Zn(2+) binding site. Glutamate 484 is an active-site residue. The Zn(2+) site is built by histidine 487 and aspartate 562.

It in the N-terminal section; belongs to the AAA ATPase family. The protein in the C-terminal section; belongs to the peptidase M41 family. Zn(2+) is required as a cofactor.

Its subcellular location is the plastid. The protein resides in the chloroplast thylakoid membrane. In terms of biological role, probable ATP-dependent zinc metallopeptidase. This chain is ATP-dependent zinc metalloprotease FTSH 6, chloroplastic (FTSH6), found in Oryza sativa subsp. japonica (Rice).